We begin with the raw amino-acid sequence, 347 residues long: Holliday junction branch migration complex subunit RuvB (347 aa).

The segment at M1–Y186 is large ATPase domain (RuvB-L). Residues L25, R26, G67, K70, T71, T72, E133 to Y135, R176, Y186, and R223 each bind ATP. T71 contributes to the Mg(2+) binding site. Residues S187–R257 form a small ATPAse domain (RuvB-S) region. Positions G260–F347 are head domain (RuvB-H). DNA contacts are provided by R315 and R320.

This sequence belongs to the RuvB family. Homohexamer. Forms an RuvA(8)-RuvB(12)-Holliday junction (HJ) complex. HJ DNA is sandwiched between 2 RuvA tetramers; dsDNA enters through RuvA and exits via RuvB. An RuvB hexamer assembles on each DNA strand where it exits the tetramer. Each RuvB hexamer is contacted by two RuvA subunits (via domain III) on 2 adjacent RuvB subunits; this complex drives branch migration. In the full resolvosome a probable DNA-RuvA(4)-RuvB(12)-RuvC(2) complex forms which resolves the HJ.

Its subcellular location is the cytoplasm. The enzyme catalyses ATP + H2O = ADP + phosphate + H(+). Its function is as follows. The RuvA-RuvB-RuvC complex processes Holliday junction (HJ) DNA during genetic recombination and DNA repair, while the RuvA-RuvB complex plays an important role in the rescue of blocked DNA replication forks via replication fork reversal (RFR). RuvA specifically binds to HJ cruciform DNA, conferring on it an open structure. The RuvB hexamer acts as an ATP-dependent pump, pulling dsDNA into and through the RuvAB complex. RuvB forms 2 homohexamers on either side of HJ DNA bound by 1 or 2 RuvA tetramers; 4 subunits per hexamer contact DNA at a time. Coordinated motions by a converter formed by DNA-disengaged RuvB subunits stimulates ATP hydrolysis and nucleotide exchange. Immobilization of the converter enables RuvB to convert the ATP-contained energy into a lever motion, pulling 2 nucleotides of DNA out of the RuvA tetramer per ATP hydrolyzed, thus driving DNA branch migration. The RuvB motors rotate together with the DNA substrate, which together with the progressing nucleotide cycle form the mechanistic basis for DNA recombination by continuous HJ branch migration. Branch migration allows RuvC to scan DNA until it finds its consensus sequence, where it cleaves and resolves cruciform DNA. The polypeptide is Holliday junction branch migration complex subunit RuvB (Borrelia garinii subsp. bavariensis (strain ATCC BAA-2496 / DSM 23469 / PBi) (Borreliella bavariensis)).